The primary structure comprises 260 residues: Transforming acid coiled-coil-containing protein 1 (260 aa).

Positions 1 to 43 (MSLNTTFTKEDGTEVVIPFNGSQNGHPENEEPEVEEAAEPSSS) are disordered. Residues 108 to 249 (ASSEELEKAL…CDQLLNDVDV (142 aa)) adopt a coiled-coil conformation.

This sequence belongs to the TACC family. In terms of assembly, interacts with zyg-9 to form a heterodimer. Interacts with zyg-8 to form a heterodimer. Interacts with efa-6 (via N-terminus). Expressed in touch neurons.

The protein localises to the cytoplasm. Its subcellular location is the cytoskeleton. It is found in the spindle pole. The protein resides in the microtubule organizing center. It localises to the centrosome. The protein localises to the chromosome. Its subcellular location is the centromere. It is found in the kinetochore. The protein resides in the cell projection. It localises to the axon. The protein localises to the perikaryon. Functionally, involved in microtubule formation, polymerization and assembly, regulating microtubule nucleation and length. Plays a role in pronuclear migration and mitotic and meiotic spindle elongation during early embryogenesis. In complex with zyg-9, functions during the early stages of embryonic development to regulate microtubule assembly throughout the cell cycle. Specifically, the complex is required for the formation and growth of astral microtubules and spindle microtubules during mitotic spindle assembly. At anaphase, the complex is required for mitotic spindle positioning in one-cell stage embryos. The complex acts in a partially redundant manner with the tac-1/zyg-8 complex to regulate microtubule assembly and processes during interphase, mitosis and meiosis in embryos. Plays a role in injury-induced axonal regrowth, regeneration and microtubule stability in PLM neurons and this may be downstream of efa-6. The chain is Transforming acid coiled-coil-containing protein 1 from Caenorhabditis elegans.